A 106-amino-acid chain; its full sequence is uncharacterized protein (106 aa).

The N-terminal stretch at methionine 1–alanine 31 is a signal peptide. Positions valine 57–threonine 89 form a coiled coil.

This is an uncharacterized protein from Bacillus subtilis (strain 168).